A 215-amino-acid polypeptide reads, in one-letter code: Cytochrome b6 (215 aa).

The chain crosses the membrane as a helical span at residues 32 to 52; the sequence is IFYCLGGITFTCFIIQVATGF. Residue cysteine 35 participates in heme c binding. Heme b is bound by residues histidine 86 and histidine 100. 3 helical membrane-spanning segments follow: residues 90–110, 116–136, and 186–206; these read ASMMVLMMILHVCRVYLTGGF, LTWVTGIILAILTVSFGVTGY, and LHTFVLPLLTATFMLGHFLMI. Residues histidine 187 and histidine 202 each coordinate heme b.

This sequence belongs to the cytochrome b family. PetB subfamily. In terms of assembly, the 4 large subunits of the cytochrome b6-f complex are cytochrome b6, subunit IV (17 kDa polypeptide, PetD), cytochrome f and the Rieske protein, while the 4 small subunits are PetG, PetL, PetM and PetN. The complex functions as a dimer. Heme b serves as cofactor. The cofactor is heme c.

Its subcellular location is the plastid. The protein resides in the chloroplast thylakoid membrane. In terms of biological role, component of the cytochrome b6-f complex, which mediates electron transfer between photosystem II (PSII) and photosystem I (PSI), cyclic electron flow around PSI, and state transitions. This Euglena gracilis protein is Cytochrome b6.